The following is a 344-amino-acid chain: Uroporphyrinogen decarboxylase (344 aa).

Residues 25-29, D75, Y152, S207, and H323 contribute to the substrate site; that span reads RQAGR.

Belongs to the uroporphyrinogen decarboxylase family. Homodimer.

The protein resides in the cytoplasm. The enzyme catalyses uroporphyrinogen III + 4 H(+) = coproporphyrinogen III + 4 CO2. It participates in porphyrin-containing compound metabolism; protoporphyrin-IX biosynthesis; coproporphyrinogen-III from 5-aminolevulinate: step 4/4. Its function is as follows. Catalyzes the decarboxylation of four acetate groups of uroporphyrinogen-III to yield coproporphyrinogen-III. In Ruegeria pomeroyi (strain ATCC 700808 / DSM 15171 / DSS-3) (Silicibacter pomeroyi), this protein is Uroporphyrinogen decarboxylase.